Reading from the N-terminus, the 407-residue chain is Odorant receptor 67a (407 aa).

Over 1–40 (MDNVAEMPEEKYVEVDDFLRLAVKFYNTLGIDPYETGRKR) the chain is Cytoplasmic. Residues 41-61 (TIWFQIYFALNMFNMVFSFYA) form a helical membrane-spanning segment. Residues 62 to 79 (EVATLVDRLRDNENFLES) lie on the Extracellular side of the membrane. A helical membrane pass occupies residues 80 to 100 (CILLSYVSFVVMGLSKIGAVM). At 101-144 (KKKPKMTALVRQLETCFPSPSAKVQEEYAVKSWLKRCHIYTKGF) the chain is on the cytoplasmic side. The chain crosses the membrane as a helical span at residues 145–165 (GGLFMIMYFAHALIPLFIYFI). The Extracellular portion of the chain corresponds to 166–208 (QRVLLHYPDAKQIMPFYQLEPWEFRDSWLFYPSYFHQSSAGYT). Residues 209–229 (ATCGSIAGDLMIFAVVLQVIM) traverse the membrane as a helical segment. Topologically, residues 230–278 (HYERLAKVLREFKIQAHNAPNGAKEDIRKLQSLVANHIDILRLTDLMNE) are cytoplasmic. The chain crosses the membrane as a helical span at residues 279 to 300 (VFGIPLLLNFIASALLVCLVGV). At 301 to 314 (QLTIALSPEYFCKQ) the chain is on the extracellular side. The helical transmembrane segment at 315-331 (MLFLISVLLEVYLLCSF) threads the bilayer. Topologically, residues 332 to 378 (SQRLIDASENVGHAAYDMDWLGSDKRFKKILIFISMRSQKPVCLKAT) are cytoplasmic. A helical membrane pass occupies residues 379-401 (VVLDLSMPTMSIFLGMSYKFFCA). Residues 402 to 407 (VRTMYQ) lie on the Extracellular side of the membrane.

This sequence belongs to the insect chemoreceptor superfamily. Heteromeric odorant receptor channel (TC 1.A.69) family. Or49a subfamily. Interacts with Orco. Complexes exist early in the endomembrane system in olfactory sensory neurons (OSNs), coupling these complexes to the conserved ciliary trafficking pathway. As to expression, expressed in olfactory sensory neurons in the antenna.

It localises to the cell membrane. Functionally, odorant receptor which mediates acceptance or avoidance behavior, depending on its substrates. The odorant receptor repertoire encodes a large collection of odor stimuli that vary widely in identity, intensity, and duration. Forms a complex with Orco to form odorant-sensing units, providing sensitive and prolonged odorant signaling and calcium permeability. Involved in the behavioral responses to benzaldehyde and acetophenone. The sequence is that of Odorant receptor 67a (Or67a) from Drosophila melanogaster (Fruit fly).